An 88-amino-acid polypeptide reads, in one-letter code: MIIFYGLFSILVLTSINIAEAGHHNRVNCLLPPKTGPCKGSFARYYFDIETGSCKAFIYGGCEGNSNNFSEKHHCEKRCRGFRKFGGK.

The N-terminal stretch at 1–21 (MIIFYGLFSILVLTSINIAEA) is a signal peptide. In terms of domain architecture, BPTI/Kunitz inhibitor spans 29–79 (CLLPPKTGPCKGSFARYYFDIETGSCKAFIYGGCEGNSNNFSEKHHCEKRC). Intrachain disulfides connect Cys29/Cys79, Cys38/Cys62, and Cys54/Cys75. N-linked (GlcNAc...) asparagine glycosylation is present at Asn68.

It belongs to the venom Kunitz-type family. Scorpion delta-Ktx subfamily. Delta-Ktx 1 sub-subfamily. Expressed by the venom gland.

Its subcellular location is the secreted. In terms of biological role, dual-function toxin that inhibits trypsin at a molar ratio of 1:1 (Ki=107 nM) and inhibits mKv1.3/KCNA3 potassium channels (IC(50)=6.2 nM, and inhibits 80% of currents at 1 uM). In Hoffmannihadrurus gertschi (Scorpion), this protein is Kunitz-type serine protease inhibitor Hg1.